Reading from the N-terminus, the 940-residue chain is Protein translocase subunit SecA (940 aa).

ATP contacts are provided by residues Gln87, 105–109 (GEGKT), and Asp494. The tract at residues 879-940 (AQQQKKAVEG…KCHGASEASV (62 aa)) is disordered. Positions 884 to 898 (KAVEGRATADGKLDE) are enriched in basic and acidic residues. Positions 900–915 (SVAAAARPAAASRPAV) are enriched in low complexity. Residues Cys921, Cys923, Cys932, and His933 each contribute to the Zn(2+) site.

Belongs to the SecA family. Monomer and homodimer. Part of the essential Sec protein translocation apparatus which comprises SecA, SecYEG and auxiliary proteins SecDF-YajC and YidC. The cofactor is Zn(2+).

The protein localises to the cell inner membrane. It is found in the cytoplasm. It catalyses the reaction ATP + H2O + cellular proteinSide 1 = ADP + phosphate + cellular proteinSide 2.. In terms of biological role, part of the Sec protein translocase complex. Interacts with the SecYEG preprotein conducting channel. Has a central role in coupling the hydrolysis of ATP to the transfer of proteins into and across the cell membrane, serving as an ATP-driven molecular motor driving the stepwise translocation of polypeptide chains across the membrane. This is Protein translocase subunit SecA from Myxococcus xanthus (strain DK1622).